Consider the following 262-residue polypeptide: Type III pantothenate kinase (262 aa).

Residue 6–13 coordinates ATP; that stretch reads DVGNTNAV. Substrate-binding positions include tyrosine 100 and 107 to 110; that span reads GADR. The Proton acceptor role is filled by aspartate 109. Aspartate 129 lines the K(+) pocket. Threonine 132 contributes to the ATP binding site. Substrate is bound at residue threonine 184.

This sequence belongs to the type III pantothenate kinase family. Homodimer. NH4(+) is required as a cofactor. It depends on K(+) as a cofactor.

It localises to the cytoplasm. It catalyses the reaction (R)-pantothenate + ATP = (R)-4'-phosphopantothenate + ADP + H(+). It participates in cofactor biosynthesis; coenzyme A biosynthesis; CoA from (R)-pantothenate: step 1/5. Catalyzes the phosphorylation of pantothenate (Pan), the first step in CoA biosynthesis. The polypeptide is Type III pantothenate kinase (Bacillus cereus (strain G9842)).